We begin with the raw amino-acid sequence, 474 residues long: Cysteine--tRNA ligase (474 aa).

Cys-29 is a Zn(2+) binding site. A 'HIGH' region motif is present at residues 31–41; sequence ITPYDHVHVGH. Zn(2+) is bound by residues Cys-215, His-240, and Glu-244. A 'KMSKS' region motif is present at residues 273-277; it reads KMSKS. Lys-276 provides a ligand contact to ATP.

Belongs to the class-I aminoacyl-tRNA synthetase family. It depends on Zn(2+) as a cofactor.

The protein resides in the cytoplasm. The catalysed reaction is tRNA(Cys) + L-cysteine + ATP = L-cysteinyl-tRNA(Cys) + AMP + diphosphate. In Pyrobaculum aerophilum (strain ATCC 51768 / DSM 7523 / JCM 9630 / CIP 104966 / NBRC 100827 / IM2), this protein is Cysteine--tRNA ligase.